Consider the following 109-residue polypeptide: FK506-binding protein (109 aa).

The PPIase FKBP-type domain occupies glycine 20–tyrosine 108.

Belongs to the FKBP-type PPIase family.

It catalyses the reaction [protein]-peptidylproline (omega=180) = [protein]-peptidylproline (omega=0). With respect to regulation, inhibited by FK506. Its function is as follows. PPIases accelerate the folding of proteins. The sequence is that of FK506-binding protein (fbp) from Neisseria meningitidis serogroup A / serotype 4A (strain DSM 15465 / Z2491).